Consider the following 302-residue polypeptide: Late embryogenesis abundant protein D-29 (302 aa).

3 disordered regions span residues 25-93 (HMPS…AKEY), 168-193 (VKNA…LADS), and 205-302 (AKEK…NHKN). Composition is skewed to basic and acidic residues over residues 34 to 70 (RDYS…HAAN) and 79 to 93 (AKDR…AKEY). Residues 205 to 286 (AKEKVRDMAD…KAEETIESAK (82 aa)) show a composition bias toward basic and acidic residues.

It belongs to the LEA type 1 family.

In terms of biological role, LEA protein are late embryonic proteins abundant in higher plant seed embryos. There are two subsets of LEA proteins (5a and 5b), the first ones are expressed when the cotyledon weight reach 80 mg and the second set are expressed above 100 mg. The function of those proteins is not known. The protein is Late embryogenesis abundant protein D-29 of Gossypium hirsutum (Upland cotton).